A 370-amino-acid polypeptide reads, in one-letter code: MRPDCTDFRQLFLDDVPMMDMRAPVEFAKGAFPGVVNLPLMNDQERQKVGTCYKQQGQAAAIALGHQLVSGTTKQARLEAWAAFAKAHPDGYLYCFRGGLRSQIVQGWLRDEAGIQYPRVKGGYKAMRTFLLETTQQAVEQCDFVLVGGLTGTGKTDVLHQLDNVLDLEGHANHRGSSFGKRATAQPAQIDFENQLAIDVLKKRARGIGQFVLEDEGRIVGSCTVPLELYQGMQHYPLVWLEDSFTNRVERILRDYVVNLSAEFKAVHGEEDGPRLFAERMLQSMANIYKRLGGERHQRLSEMLREALQEQQRSGAVDLHRGWIEGLLNEYYDPMYAYQRAAKAERIEFAGDAVEVREYLKARALREPRK.

The region spanning 12–136 (FLDDVPMMDM…MRTFLLETTQ (125 aa)) is the Rhodanese domain. Cys95 (S-selanylcysteine intermediate) is an active-site residue.

Belongs to the SelU family. As to quaternary structure, monomer.

It catalyses the reaction 5-methylaminomethyl-2-thiouridine(34) in tRNA + selenophosphate + (2E)-geranyl diphosphate + H2O + H(+) = 5-methylaminomethyl-2-selenouridine(34) in tRNA + (2E)-thiogeraniol + phosphate + diphosphate. The catalysed reaction is 5-methylaminomethyl-2-thiouridine(34) in tRNA + (2E)-geranyl diphosphate = 5-methylaminomethyl-S-(2E)-geranyl-thiouridine(34) in tRNA + diphosphate. The enzyme catalyses 5-methylaminomethyl-S-(2E)-geranyl-thiouridine(34) in tRNA + selenophosphate + H(+) = 5-methylaminomethyl-2-(Se-phospho)selenouridine(34) in tRNA + (2E)-thiogeraniol. It carries out the reaction 5-methylaminomethyl-2-(Se-phospho)selenouridine(34) in tRNA + H2O = 5-methylaminomethyl-2-selenouridine(34) in tRNA + phosphate. Its function is as follows. Involved in the post-transcriptional modification of the uridine at the wobble position (U34) of tRNA(Lys), tRNA(Glu) and tRNA(Gln). Catalyzes the conversion of 2-thiouridine (S2U-RNA) to 2-selenouridine (Se2U-RNA). Acts in a two-step process involving geranylation of 2-thiouridine (S2U) to S-geranyl-2-thiouridine (geS2U) and subsequent selenation of the latter derivative to 2-selenouridine (Se2U) in the tRNA chain. The chain is tRNA 2-selenouridine synthase from Pseudomonas putida (strain ATCC 700007 / DSM 6899 / JCM 31910 / BCRC 17059 / LMG 24140 / F1).